Here is a 238-residue protein sequence, read N- to C-terminus: Ribosomal RNA small subunit methyltransferase G (238 aa).

Residues glycine 77, phenylalanine 82, 128–129 (AE), and arginine 147 contribute to the S-adenosyl-L-methionine site.

The protein belongs to the methyltransferase superfamily. RNA methyltransferase RsmG family.

It is found in the cytoplasm. In terms of biological role, specifically methylates the N7 position of guanine in position 535 of 16S rRNA. This chain is Ribosomal RNA small subunit methyltransferase G, found in Geobacillus kaustophilus (strain HTA426).